The sequence spans 279 residues: Energy-coupling factor transporter ATP-binding protein EcfA1 (279 aa).

Positions 6–240 (ISVDHLTYQY…GTQLVEMGLD (235 aa)) constitute an ABC transporter domain. An ATP-binding site is contributed by 40-47 (GHNGSGKS).

Belongs to the ABC transporter superfamily. Energy-coupling factor EcfA family. In terms of assembly, forms a stable energy-coupling factor (ECF) transporter complex composed of 2 membrane-embedded substrate-binding proteins (S component), 2 ATP-binding proteins (A component) and 2 transmembrane proteins (T component).

It localises to the cell membrane. In terms of biological role, ATP-binding (A) component of a common energy-coupling factor (ECF) ABC-transporter complex. Unlike classic ABC transporters this ECF transporter provides the energy necessary to transport a number of different substrates. The chain is Energy-coupling factor transporter ATP-binding protein EcfA1 from Levilactobacillus brevis (strain ATCC 367 / BCRC 12310 / CIP 105137 / JCM 1170 / LMG 11437 / NCIMB 947 / NCTC 947) (Lactobacillus brevis).